A 701-amino-acid polypeptide reads, in one-letter code: Elongation factor G (701 aa).

The tr-type G domain occupies 11–287; the sequence is TKVRNIGIMA…AVIDYLPSPL (277 aa). Residues 20–27, 84–88, and 138–141 contribute to the GTP site; these read AHIDAGKT, DTPGH, and NKMD.

It belongs to the TRAFAC class translation factor GTPase superfamily. Classic translation factor GTPase family. EF-G/EF-2 subfamily.

Its subcellular location is the cytoplasm. Catalyzes the GTP-dependent ribosomal translocation step during translation elongation. During this step, the ribosome changes from the pre-translocational (PRE) to the post-translocational (POST) state as the newly formed A-site-bound peptidyl-tRNA and P-site-bound deacylated tRNA move to the P and E sites, respectively. Catalyzes the coordinated movement of the two tRNA molecules, the mRNA and conformational changes in the ribosome. In Mycobacterium leprae (strain Br4923), this protein is Elongation factor G.